An 86-amino-acid chain; its full sequence is Omega-theraphotoxin-Hhn1f 4 (86 aa).

The signal sequence occupies residues 1-21 (MKSIVFVALFGLALLAVVCSA). A propeptide spanning residues 22-50 (SEDAHKELLKEVVRAMVVDKTDAVQAGER) is cleaved from the precursor. Disulfide bonds link Cys-52–Cys-66, Cys-59–Cys-71, and Cys-65–Cys-78.

The protein belongs to the neurotoxin 10 (Hwtx-1) family. 17 (Hntx-9) subfamily. In terms of tissue distribution, expressed by the venom gland.

It is found in the secreted. Ion channel inhibitor. The chain is Omega-theraphotoxin-Hhn1f 4 from Cyriopagopus hainanus (Chinese bird spider).